We begin with the raw amino-acid sequence, 468 residues long: ATP synthase subunit beta (468 aa).

Residue 155-162 (GGAGVGKT) participates in ATP binding.

This sequence belongs to the ATPase alpha/beta chains family. F-type ATPases have 2 components, CF(1) - the catalytic core - and CF(0) - the membrane proton channel. CF(1) has five subunits: alpha(3), beta(3), gamma(1), delta(1), epsilon(1). CF(0) has three main subunits: a(1), b(2) and c(9-12). The alpha and beta chains form an alternating ring which encloses part of the gamma chain. CF(1) is attached to CF(0) by a central stalk formed by the gamma and epsilon chains, while a peripheral stalk is formed by the delta and b chains.

It is found in the cell membrane. It carries out the reaction ATP + H2O + 4 H(+)(in) = ADP + phosphate + 5 H(+)(out). Produces ATP from ADP in the presence of a proton gradient across the membrane. The catalytic sites are hosted primarily by the beta subunits. This Streptococcus pyogenes serotype M6 (strain ATCC BAA-946 / MGAS10394) protein is ATP synthase subunit beta.